The chain runs to 268 residues: Phosphatidylcholine synthase (268 aa).

At 1-27 the chain is on the cytoplasmic side; sequence MAARKAAKKLTDRIPRPKKKVTWPQAR. A helical transmembrane segment spans residues 28–48; the sequence is AFSVHLLTASGSFLAFLSLVA. Topologically, residues 49-53 are periplasmic; that stretch reads ASEER. A helical membrane pass occupies residues 54-74; that stretch reads WTAMFWWLGLALFVDGIDGPI. The Cytoplasmic segment spans residues 75-88; that stretch reads ARKLEVKEILPTWS. Residues 89 to 109 form a helical membrane-spanning segment; it reads GELLDNIIDYVTYVLIPAFAL. The Periplasmic segment spans residues 110 to 112; the sequence is YQR. The chain crosses the membrane as a helical span at residues 113–133; the sequence is GFMGEGLSFLSAAIIVVSSAI. Topologically, residues 134 to 145 are cytoplasmic; that stretch reads YYADTGMKTKEN. Residues 146-166 form a helical membrane-spanning segment; the sequence is FFKGFPVVWNMVVFTLFVIEP. Residues 167 to 168 are Periplasmic-facing; it reads GQ. Residues 169-189 form a helical membrane-spanning segment; that stretch reads WVSFAVVVVAGILTFVPINFI. The Cytoplasmic portion of the chain corresponds to 190-203; that stretch reads HPVRVVRLRPFNLT. Residues 204–224 traverse the membrane as a helical segment; that stretch reads MTLLWCAFGALALAQAALAAF. Residues 225–240 are Periplasmic-facing; that stretch reads YDQIGVLGAQVSTFIK. Residues 241–261 form a helical membrane-spanning segment; sequence IGITITGLYLACIGGIMQFFP. Residues 262–268 are Cytoplasmic-facing; the sequence is NLGAKKA.

It belongs to the CDP-alcohol phosphatidyltransferase class-I family. The cofactor is Mn(2+).

It is found in the cell inner membrane. The catalysed reaction is a CDP-1,2-diacyl-sn-glycerol + choline = a 1,2-diacyl-sn-glycero-3-phosphocholine + CMP + H(+). Its function is as follows. Condenses choline with CDP-diglyceride to produce phosphatidylcholine and CMP. This is Phosphatidylcholine synthase (pcs) from Mesorhizobium japonicum (strain LMG 29417 / CECT 9101 / MAFF 303099) (Mesorhizobium loti (strain MAFF 303099)).